Consider the following 300-residue polypeptide: Ornithine carbamoyltransferase (300 aa).

Residues 49–52, glutamine 76, arginine 100, and 127–130 each bind carbamoyl phosphate; these read STRT and HPCQ. L-ornithine contacts are provided by residues asparagine 158, aspartate 218, and 222-223; that span reads SM. Carbamoyl phosphate is bound by residues 258–259 and arginine 286; that span reads CL.

Belongs to the aspartate/ornithine carbamoyltransferase superfamily. OTCase family.

The protein resides in the cytoplasm. It carries out the reaction carbamoyl phosphate + L-ornithine = L-citrulline + phosphate + H(+). Its pathway is amino-acid biosynthesis; L-arginine biosynthesis; L-arginine from L-ornithine and carbamoyl phosphate: step 1/3. In terms of biological role, reversibly catalyzes the transfer of the carbamoyl group from carbamoyl phosphate (CP) to the N(epsilon) atom of ornithine (ORN) to produce L-citrulline. The sequence is that of Ornithine carbamoyltransferase from Nitratidesulfovibrio vulgaris (strain ATCC 29579 / DSM 644 / CCUG 34227 / NCIMB 8303 / VKM B-1760 / Hildenborough) (Desulfovibrio vulgaris).